A 333-amino-acid polypeptide reads, in one-letter code: Chitinase-like protein 2 (333 aa).

An N-terminal signal peptide occupies residues 1–27 (MVSKPLFSLLLLTVALVVFQTGTLVNA). Cysteine 50 and cysteine 56 are joined by a disulfide. Asparagine 65 carries N-linked (GlcNAc...) asparagine glycosylation. A disulfide bond links cysteine 165 and cysteine 175. Asparagine 216 and asparagine 252 each carry an N-linked (GlcNAc...) asparagine glycan. Cysteines 275 and 313 form a disulfide. A disordered region spans residues 307-333 (PHEKLSCADQEPFSSSSSAPPSSGSSS). Low complexity predominate over residues 320–333 (SSSSSAPPSSGSSS).

The protein belongs to the glycosyl hydrolase 19 family. In terms of tissue distribution, mostly expressed in stems, especially in xylem and interfascicular fibers.

It is found in the secreted. No chitinase activity. Required for proper cell wall biosynthesis in etiolated seedlings. Prevents lignin accumulation in hypocotyls. This is Chitinase-like protein 2 (CTL2) from Arabidopsis thaliana (Mouse-ear cress).